We begin with the raw amino-acid sequence, 102 residues long: RNA-binding protein Hfq (102 aa).

The Sm domain maps to 9-68; that stretch reads DPFLNALRRERVPVSIYLVNGIKLQGQIESFDQFVILLKNTVSQMVYKHAISTVVPSRPV. Residues 63 to 102 are disordered; it reads VPSRPVSHHSNNAGGGASNNYHHGSNAQGSTAQQDSEETE. Over residues 70–88 the composition is skewed to low complexity; sequence HHSNNAGGGASNNYHHGSN.

This sequence belongs to the Hfq family. In terms of assembly, homohexamer.

In terms of biological role, RNA chaperone that binds small regulatory RNA (sRNAs) and mRNAs to facilitate mRNA translational regulation in response to envelope stress, environmental stress and changes in metabolite concentrations. Also binds with high specificity to tRNAs. This is RNA-binding protein Hfq from Salmonella agona (strain SL483).